The chain runs to 379 residues: Protein psi1 (379 aa).

The J domain maps to 1–70 (MVADTKLYDC…RKLYDQYGIT (70 aa)). Disordered stretches follow at residues 69 to 95 (ITEG…FPGA) and 176 to 205 (FGGG…AQNE). The span at 81–95 (AEGGPGAGFGGFPGA) shows a compositional bias: gly residues.

Functionally, required for nuclear migration during mitosis. It is required for the normal initiation of translation. In Schizosaccharomyces pombe (strain 972 / ATCC 24843) (Fission yeast), this protein is Protein psi1 (psi1).